The sequence spans 200 residues: NAD(P)H dehydrogenase (quinone) (200 aa).

Residues Val4–Val191 form the Flavodoxin-like domain. FMN contacts are provided by residues Ser10 to Val15 and Thr79 to Phe81. Tyr12 serves as a coordination point for NAD(+). Residue Trp99 coordinates substrate. FMN-binding positions include Ser114–Gly120 and His135.

This sequence belongs to the WrbA family. It depends on FMN as a cofactor.

It catalyses the reaction a quinone + NADH + H(+) = a quinol + NAD(+). It carries out the reaction a quinone + NADPH + H(+) = a quinol + NADP(+). The protein is NAD(P)H dehydrogenase (quinone) of Burkholderia vietnamiensis (strain G4 / LMG 22486) (Burkholderia cepacia (strain R1808)).